The sequence spans 76 residues: Exodeoxyribonuclease 7 small subunit (76 aa).

This sequence belongs to the XseB family. In terms of assembly, heterooligomer composed of large and small subunits.

It is found in the cytoplasm. It catalyses the reaction Exonucleolytic cleavage in either 5'- to 3'- or 3'- to 5'-direction to yield nucleoside 5'-phosphates.. Bidirectionally degrades single-stranded DNA into large acid-insoluble oligonucleotides, which are then degraded further into small acid-soluble oligonucleotides. The protein is Exodeoxyribonuclease 7 small subunit of Staphylococcus haemolyticus (strain JCSC1435).